A 417-amino-acid chain; its full sequence is Serine hydroxymethyltransferase (417 aa).

(6S)-5,6,7,8-tetrahydrofolate-binding positions include Leu121 and 125–127 (GHL). An N6-(pyridoxal phosphate)lysine modification is found at Lys229. A (6S)-5,6,7,8-tetrahydrofolate-binding site is contributed by 355–357 (SPF).

It belongs to the SHMT family. As to quaternary structure, homodimer. Pyridoxal 5'-phosphate is required as a cofactor.

Its subcellular location is the cytoplasm. It catalyses the reaction (6R)-5,10-methylene-5,6,7,8-tetrahydrofolate + glycine + H2O = (6S)-5,6,7,8-tetrahydrofolate + L-serine. It functions in the pathway one-carbon metabolism; tetrahydrofolate interconversion. It participates in amino-acid biosynthesis; glycine biosynthesis; glycine from L-serine: step 1/1. Catalyzes the reversible interconversion of serine and glycine with tetrahydrofolate (THF) serving as the one-carbon carrier. This reaction serves as the major source of one-carbon groups required for the biosynthesis of purines, thymidylate, methionine, and other important biomolecules. Also exhibits THF-independent aldolase activity toward beta-hydroxyamino acids, producing glycine and aldehydes, via a retro-aldol mechanism. In Aeromonas hydrophila subsp. hydrophila (strain ATCC 7966 / DSM 30187 / BCRC 13018 / CCUG 14551 / JCM 1027 / KCTC 2358 / NCIMB 9240 / NCTC 8049), this protein is Serine hydroxymethyltransferase.